Consider the following 268-residue polypeptide: Tryptophan synthase alpha chain (268 aa).

Catalysis depends on proton acceptor residues Glu-49 and Asp-60.

It belongs to the TrpA family. Tetramer of two alpha and two beta chains.

It carries out the reaction (1S,2R)-1-C-(indol-3-yl)glycerol 3-phosphate + L-serine = D-glyceraldehyde 3-phosphate + L-tryptophan + H2O. It participates in amino-acid biosynthesis; L-tryptophan biosynthesis; L-tryptophan from chorismate: step 5/5. Its function is as follows. The alpha subunit is responsible for the aldol cleavage of indoleglycerol phosphate to indole and glyceraldehyde 3-phosphate. The polypeptide is Tryptophan synthase alpha chain (Xanthomonas axonopodis pv. citri (strain 306)).